The chain runs to 94 residues: uncharacterized protein (94 aa).

The segment covering 33–42 has biased composition (polar residues); sequence INSLPTFTKP. The segment at 33 to 57 is disordered; sequence INSLPTFTKPNDSNNNVNKSSNDGV. Positions 43 to 57 are enriched in low complexity; it reads NDSNNNVNKSSNDGV.

This is an uncharacterized protein from Dictyostelium discoideum (Social amoeba).